Here is a 512-residue protein sequence, read N- to C-terminus: MAAIGVLKVPPSSSSSSSSSSSKAIARNLSFTSSHLSGDKIFTLSGRTRRTSGRNPFIVSPKAVSDSKNSQTCLDPDASRSVLGIILGGGAGTRLYPLTKKRAKPAVPLGANYRLIDIPVSNCLNSNISKIYVLTQFNSASLNRHLSRAYASNLGGYKNEGFVEVLAAQQSPENPNWFQGTADAVRQYLWLFEEHNVLEYLVLAGDHLYRMDYERFIQAHRESDADITVAALPMDEARATAFGLMKIDEEGRIIEFSENPKGEQLKAMKVDTTILGLDDDRAKEMPYIASMGIYVVSKHVMLDLLRDKFPGANDFGSEVIPGATELGMRVQAYLYDGYWEDIGTIEAFYNANLGITKKPVPDFSFYDRSSPIYTQPRYLPPSKMLDADITDSVIGEGCVIKNCKIHHSVVGLRSCISEGAIIEDTLLMGADYYETDADRRFLAAKGGVPIGIGKNSHIRRAIIDKNARIGDDVKIINSDNVQEAARETEGYFIKSGIVTVIKDALIPSGTVI.

Residues 1-21 (MAAIGVLKVPPSSSSSSSSSS) form a disordered region. The transit peptide at 1–63 (MAAIGVLKVP…RNPFIVSPKA (63 aa)) directs the protein to the chloroplast. Low complexity predominate over residues 12 to 21 (SSSSSSSSSS).

It belongs to the bacterial/plant glucose-1-phosphate adenylyltransferase family. Heterotetramer. As to expression, leaves and seeds.

The protein localises to the plastid. Its subcellular location is the chloroplast. It carries out the reaction alpha-D-glucose 1-phosphate + ATP + H(+) = ADP-alpha-D-glucose + diphosphate. It participates in glycan biosynthesis; starch biosynthesis. Activated by 3'phosphoglycerate, inhibited by orthophosphate. Allosteric regulation. This protein plays a role in synthesis of starch. It catalyzes the synthesis of the activated glycosyl donor, ADP-glucose from Glc-1-P and ATP. The chain is Glucose-1-phosphate adenylyltransferase small subunit 2, chloroplastic (AGPP) from Vicia faba (Broad bean).